A 125-amino-acid chain; its full sequence is Profilin-P (125 aa).

An N-acetylserine modification is found at Ser-2.

The protein belongs to the profilin family. Occurs in many kinds of cells as a complex with monomeric actin in a 1:1 ratio.

Its subcellular location is the cytoplasm. The protein localises to the cytoskeleton. Its function is as follows. Binds to actin and affects the structure of the cytoskeleton. At high concentrations, profilin prevents the polymerization of actin, whereas it enhances it at low concentrations. By binding to PIP2, it inhibits the formation of IP3 and DG. This chain is Profilin-P (PROP), found in Physarum polycephalum (Slime mold).